Here is a 230-residue protein sequence, read N- to C-terminus: MITSIRYRGFSFYYKDNDNKYKEIFDEILAYNFKTVKVLRNIDDTKVSLIDTKYGRYVFKVFAPKTKRNERFLKSFVKGDYYQNLIVETDRVRSAGLTFPNDFYFLAERKIFNYASVFIMLIEYVEGVELNDMPIIPENVKAEIKASMEKLHALNMLSGDPHRGNFIVSKDGVRIIDLSGKSCTAERKARDRLAMERHLGIANEIKDYGYYSVIYRTKLRKFIKKLKGKA.

The protein belongs to the protein kinase superfamily. RfaY/WaaY family.

It catalyses the reaction alpha-D-Glc-(1-&gt;3)-[L-alpha-D-Hep-(1-&gt;7)]-L-alpha-D-Hep-(1-&gt;3)-4-O-PO3(2-)-L-alpha-D-Hep-(1-&gt;5)-[alpha-Kdo-(2-&gt;4)]-alpha-Kdo-(2-&gt;6)-lipid A + ATP = alpha-D-Glc-(1-&gt;3)-[L-alpha-D-Hep-(1-&gt;7)]-4-O-PO3(2-)-L-alpha-D-Hep-(1-&gt;3)-4-O-PO3(2-)-L-alpha-D-Hep-(1-&gt;5)-[alpha-Kdo-(2-&gt;4)]-alpha-Kdo-(2-&gt;6)-lipid A + ADP + H(+). It participates in bacterial outer membrane biogenesis; LPS core biosynthesis. Its function is as follows. Kinase involved in the biosynthesis of the core oligosaccharide region of lipopolysaccharide (LPS). Catalyzes the phosphorylation of the second heptose unit (HepII) of the inner core. The protein is Lipopolysaccharide core heptose(II) kinase WaaY of Escherichia coli.